The primary structure comprises 191 residues: Probable DNA-directed RNA polymerase subunit delta (191 aa).

In terms of domain architecture, HTH HARE-type spans 14–83; the sequence is LSMIEVARAI…GDNKWGLRSW (70 aa). 2 stretches are compositionally biased toward acidic residues: residues 119–133 and 143–191; these read EDAI…EDEN and YDND…ETND. A disordered region spans residues 119–191; it reads EDAIDYNDDD…DDDYEDETND (73 aa).

The protein belongs to the RpoE family. In terms of assembly, RNAP is composed of a core of 2 alpha, a beta and a beta' subunits. The core is associated with a delta subunit and one of several sigma factors.

Its function is as follows. Participates in both the initiation and recycling phases of transcription. In the presence of the delta subunit, RNAP displays an increased specificity of transcription, a decreased affinity for nucleic acids, and an increased efficiency of RNA synthesis because of enhanced recycling. The sequence is that of Probable DNA-directed RNA polymerase subunit delta from Streptococcus thermophilus (strain ATCC BAA-491 / LMD-9).